We begin with the raw amino-acid sequence, 388 residues long: Succinate--CoA ligase [ADP-forming] subunit beta (388 aa).

An ATP-grasp domain is found at 9–245; it reads KELLKSYGLP…KSQENERELK (237 aa). Residues lysine 46, 53-55, glutamate 100, tyrosine 103, and glutamate 108 contribute to the ATP site; that span reads GRG. Residues asparagine 200 and aspartate 214 each contribute to the Mg(2+) site. Residues asparagine 265 and 322–324 contribute to the substrate site; that span reads GIV.

It belongs to the succinate/malate CoA ligase beta subunit family. In terms of assembly, heterotetramer of two alpha and two beta subunits. Mg(2+) is required as a cofactor.

It carries out the reaction succinate + ATP + CoA = succinyl-CoA + ADP + phosphate. The catalysed reaction is GTP + succinate + CoA = succinyl-CoA + GDP + phosphate. It participates in carbohydrate metabolism; tricarboxylic acid cycle; succinate from succinyl-CoA (ligase route): step 1/1. Succinyl-CoA synthetase functions in the citric acid cycle (TCA), coupling the hydrolysis of succinyl-CoA to the synthesis of either ATP or GTP and thus represents the only step of substrate-level phosphorylation in the TCA. The beta subunit provides nucleotide specificity of the enzyme and binds the substrate succinate, while the binding sites for coenzyme A and phosphate are found in the alpha subunit. The chain is Succinate--CoA ligase [ADP-forming] subunit beta from Psychrobacter arcticus (strain DSM 17307 / VKM B-2377 / 273-4).